The sequence spans 628 residues: (+)-alpha pinene synthase 1, chloroplastic (628 aa).

Residues M1–T18 constitute a chloroplast transit peptide. Mg(2+) contacts are provided by D379, D383, and D531. The short motif at D379–D383 is the DDXXD motif element.

This sequence belongs to the terpene synthase family. Tpsd subfamily. Mg(2+) serves as cofactor. Requires Mn(2+) as cofactor.

Its subcellular location is the plastid. The protein localises to the chloroplast. The catalysed reaction is (2E)-geranyl diphosphate = (1R,5R)-alpha-pinene + diphosphate. Its pathway is terpene metabolism; oleoresin biosynthesis. The protein operates within secondary metabolite biosynthesis; terpenoid biosynthesis. In terms of biological role, monoterpene synthase (TPS) involved in the biosynthesis of monoterpene natural products included in conifer oleoresin secretions and volatile emissions; these compounds contribute to biotic and abiotic stress defense against herbivores and pathogens. Catalyzes the conversion of (2E)-geranyl diphosphate (GPP) to (+)-alpha-pinene. This is (+)-alpha pinene synthase 1, chloroplastic from Pinus banksiana (Jack pine).